We begin with the raw amino-acid sequence, 601 residues long: NADH-ubiquinone oxidoreductase chain 5 (601 aa).

The next 15 helical transmembrane spans lie at 3–23, 36–56, 84–104, 114–134, 140–160, 171–191, 201–221, 240–260, 272–292, 324–346, 365–385, 404–426, 456–476, 483–503, and 581–601; these read LIMPFSIITLTILTIPIMMSY, VTSSVSYAFMTSMIPTMMFLL, FFSIIFVSVALFVTWSIMEFS, INQFFKYLLLFLITMMILVTA, LFIGWEGVGIMSFLLIGWWYG, AILYNRIGDIGFILTMAWLLL, IFMLKPTNLLPLLGLLVAAAG, TPVSALLHSSTMVVAGIFLLV, ILTMTLCLGAITTLFTAICAL, AFLHICTHAFFKAMLFMCSGSII, MPFTSSCLMIGSLALTGMPFL, NAWALLITLLATSFTASYSTRLI, LALGSIFAGFLISNYIPPLIT, LYMKLSALAVTIMGFMVAMGL, and LIKLYFMSFIISMTLATMLII.

This sequence belongs to the complex I subunit 5 family.

It localises to the mitochondrion inner membrane. It catalyses the reaction a ubiquinone + NADH + 5 H(+)(in) = a ubiquinol + NAD(+) + 4 H(+)(out). Its function is as follows. Core subunit of the mitochondrial membrane respiratory chain NADH dehydrogenase (Complex I) that is believed to belong to the minimal assembly required for catalysis. Complex I functions in the transfer of electrons from NADH to the respiratory chain. The immediate electron acceptor for the enzyme is believed to be ubiquinone. This chain is NADH-ubiquinone oxidoreductase chain 5 (MT-ND5), found in Dasypus novemcinctus (Nine-banded armadillo).